We begin with the raw amino-acid sequence, 86 residues long: Anti-adapter protein IraP (86 aa).

Positions M1–M36 form a coiled coil.

It belongs to the IraP family. Interacts with RssB.

It localises to the cytoplasm. Its function is as follows. Inhibits RpoS proteolysis by regulating RssB activity, thereby increasing the stability of the sigma stress factor RpoS especially during phosphate starvation, but also in stationary phase and during nitrogen starvation. Its effect on RpoS stability is due to its interaction with RssB, which probably blocks the interaction of RssB with RpoS, and the consequent delivery of the RssB-RpoS complex to the ClpXP protein degradation pathway. The polypeptide is Anti-adapter protein IraP (Escherichia coli (strain SE11)).